Here is a 1693-residue protein sequence, read N- to C-terminus: uncharacterized protein (1693 aa).

WD repeat units lie at residues 1008 to 1042, 1053 to 1083, 1094 to 1124, 1135 to 1165, 1176 to 1206, 1217 to 1247, 1258 to 1288, 1299 to 1329, 1340 to 1370, 1381 to 1411, 1422 to 1452, 1463 to 1493, 1504 to 1534, 1545 to 1575, 1586 to 1616, and 1627 to 1657; these read HHEG…YLWS, GHQE…KLWQ, GHED…RIWN, GHAD…RLWD, GHTS…RLWD, GHQN…RVWS, GHDH…RLWT, GHQK…RQWD, GHSH…RLWT, DHQG…QLWN, GHQD…RVWN, HYEK…GIWE, GHEG…RIWD, GHQS…RLWD, GHQG…RLWD, and GHGN…KLWP.

This is an uncharacterized protein from Synechocystis sp. (strain ATCC 27184 / PCC 6803 / Kazusa).